The chain runs to 331 residues: Nodulation protein D 2 (331 aa).

An HTH lysR-type domain is found at Leu6–Thr63. The H-T-H motif DNA-binding region spans Leu23–Ala42.

Belongs to the LysR transcriptional regulatory family.

In terms of biological role, nodD regulates the expression of the nodABCFE genes which encode other nodulation proteins. NodD is also a negative regulator of its own expression. Binds flavonoids as inducers. This is Nodulation protein D 2 (nodD2) from Bradyrhizobium elkanii.